Reading from the N-terminus, the 348-residue chain is GTPase Obg 1 (348 aa).

Residues 1 to 159 (MSFVDEAKIH…HCVLLKLKIV (159 aa)) enclose the Obg domain. The 170-residue stretch at 160-329 (SDVGIIGMPN…LHAQVKKAVV (170 aa)) folds into the OBG-type G domain. Residues 166-173 (GMPNAGKS), 191-195 (FTTLE), 212-215 (DIPG), 279-282 (NKCD), and 310-312 (GDE) each bind GTP. Positions 173 and 193 each coordinate Mg(2+).

The protein belongs to the TRAFAC class OBG-HflX-like GTPase superfamily. OBG GTPase family. As to quaternary structure, monomer. It depends on Mg(2+) as a cofactor.

It localises to the cytoplasm. Its function is as follows. An essential GTPase which binds GTP, GDP and possibly (p)ppGpp with moderate affinity, with high nucleotide exchange rates and a fairly low GTP hydrolysis rate. Plays a role in control of the cell cycle, stress response, ribosome biogenesis and in those bacteria that undergo differentiation, in morphogenesis control. The sequence is that of GTPase Obg 1 from Anaplasma marginale (strain St. Maries).